We begin with the raw amino-acid sequence, 255 residues long: 5-oxoprolinase subunit A (255 aa).

Belongs to the LamB/PxpA family. In terms of assembly, forms a complex composed of PxpA, PxpB and PxpC.

The enzyme catalyses 5-oxo-L-proline + ATP + 2 H2O = L-glutamate + ADP + phosphate + H(+). Its function is as follows. Catalyzes the cleavage of 5-oxoproline to form L-glutamate coupled to the hydrolysis of ATP to ADP and inorganic phosphate. This Clostridium kluyveri (strain ATCC 8527 / DSM 555 / NBRC 12016 / NCIMB 10680 / K1) protein is 5-oxoprolinase subunit A.